A 944-amino-acid polypeptide reads, in one-letter code: LPS-assembly protein LptD (944 aa).

Positions 1-33 (MALKSPAFRRKFPLLVTGGLLALQPLATSFVVA) are cleaved as a signal peptide. The segment at 52 to 102 (KATGNLPPRPVHPGAAAASSGAEAPGEVGEAQAEKPMLVTESKGRGLKSRS) is disordered. Over residues 64-82 (PGAAAASSGAEAPGEVGEA) the composition is skewed to low complexity.

The protein belongs to the LptD family. In terms of assembly, component of the lipopolysaccharide transport and assembly complex. Interacts with LptE and LptA.

Its subcellular location is the cell outer membrane. Its function is as follows. Together with LptE, is involved in the assembly of lipopolysaccharide (LPS) at the surface of the outer membrane. This chain is LPS-assembly protein LptD, found in Pseudomonas entomophila (strain L48).